A 321-amino-acid polypeptide reads, in one-letter code: Lipoyl synthase (321 aa).

7 residues coordinate [4Fe-4S] cluster: Cys68, Cys73, Cys79, Cys94, Cys98, Cys101, and Ser308. A Radical SAM core domain is found at 80 to 297 (FNHGTATFMI…KVIALELGFT (218 aa)).

The protein belongs to the radical SAM superfamily. Lipoyl synthase family. Requires [4Fe-4S] cluster as cofactor.

It is found in the cytoplasm. It carries out the reaction [[Fe-S] cluster scaffold protein carrying a second [4Fe-4S](2+) cluster] + N(6)-octanoyl-L-lysyl-[protein] + 2 oxidized [2Fe-2S]-[ferredoxin] + 2 S-adenosyl-L-methionine + 4 H(+) = [[Fe-S] cluster scaffold protein] + N(6)-[(R)-dihydrolipoyl]-L-lysyl-[protein] + 4 Fe(3+) + 2 hydrogen sulfide + 2 5'-deoxyadenosine + 2 L-methionine + 2 reduced [2Fe-2S]-[ferredoxin]. The protein operates within protein modification; protein lipoylation via endogenous pathway; protein N(6)-(lipoyl)lysine from octanoyl-[acyl-carrier-protein]: step 2/2. Functionally, catalyzes the radical-mediated insertion of two sulfur atoms into the C-6 and C-8 positions of the octanoyl moiety bound to the lipoyl domains of lipoate-dependent enzymes, thereby converting the octanoylated domains into lipoylated derivatives. This Aliivibrio salmonicida (strain LFI1238) (Vibrio salmonicida (strain LFI1238)) protein is Lipoyl synthase.